The following is a 1187-amino-acid chain: DNA-directed RNA polymerase subunit beta (1187 aa).

This sequence belongs to the RNA polymerase beta chain family. The RNAP catalytic core consists of 2 alpha, 1 beta, 1 beta' and 1 omega subunit. When a sigma factor is associated with the core the holoenzyme is formed, which can initiate transcription.

It catalyses the reaction RNA(n) + a ribonucleoside 5'-triphosphate = RNA(n+1) + diphosphate. Its function is as follows. DNA-dependent RNA polymerase catalyzes the transcription of DNA into RNA using the four ribonucleoside triphosphates as substrates. In Petrotoga mobilis (strain DSM 10674 / SJ95), this protein is DNA-directed RNA polymerase subunit beta.